A 215-amino-acid chain; its full sequence is Uracil phosphoribosyltransferase (215 aa).

5-phospho-alpha-D-ribose 1-diphosphate contacts are provided by residues Arg84, Arg109, and 136 to 144 (DPMLATGNT). Residues Ile198 and 203 to 205 (GDA) contribute to the uracil site. Asp204 contributes to the 5-phospho-alpha-D-ribose 1-diphosphate binding site.

The protein belongs to the UPRTase family. It depends on Mg(2+) as a cofactor.

It carries out the reaction UMP + diphosphate = 5-phospho-alpha-D-ribose 1-diphosphate + uracil. It functions in the pathway pyrimidine metabolism; UMP biosynthesis via salvage pathway; UMP from uracil: step 1/1. Its activity is regulated as follows. Allosterically activated by GTP. Its function is as follows. Catalyzes the conversion of uracil and 5-phospho-alpha-D-ribose 1-diphosphate (PRPP) to UMP and diphosphate. The chain is Uracil phosphoribosyltransferase from Methanothermobacter thermautotrophicus (strain ATCC 29096 / DSM 1053 / JCM 10044 / NBRC 100330 / Delta H) (Methanobacterium thermoautotrophicum).